Reading from the N-terminus, the 213-residue chain is uncharacterized protein (213 aa).

The N-terminal stretch at 1–19 (MKKVLLLLFVLTIGLALSA) is a signal peptide. The N-palmitoyl cysteine moiety is linked to residue C20. Residue C20 is the site of S-diacylglycerol cysteine attachment. Residues 20-62 (CSQSSDASEKEKPKEKKSQEELEKELDKELKKGGEPKTKKDDQ) form a disordered region. Residues 26-62 (ASEKEKPKEKKSQEELEKELDKELKKGGEPKTKKDDQ) show a composition bias toward basic and acidic residues.

It is found in the cell membrane. This is an uncharacterized protein from Bacillus subtilis (strain 168).